Reading from the N-terminus, the 221-residue chain is Mediator of RNA polymerase II transcription subunit 19a (221 aa).

A disordered region spans residues 101-221 (PVELPPAEKG…DEVGAIRVAG (121 aa)). The segment covering 142–152 (EHKKHKHKHKD) has biased composition (basic residues). Residues 153–178 (RSKDKDKDKDRDRKKDKNGHHDSGDH) show a composition bias toward basic and acidic residues. Basic residues predominate over residues 179 to 188 (SKKHHDKKRK).

Belongs to the plant Mediator complex subunit 19 family. As to quaternary structure, component of the Mediator complex. Interacts with FIB2.

It is found in the nucleus. Component of the Mediator complex, a coactivator involved in the regulated transcription of nearly all RNA polymerase II-dependent genes. Mediator functions as a bridge to convey information from gene-specific regulatory proteins to the basal RNA polymerase II transcription machinery. The Mediator complex, having a compact conformation in its free form, is recruited to promoters by direct interactions with regulatory proteins and serves for the assembly of a functional preinitiation complex with RNA polymerase II and the general transcription factors. This chain is Mediator of RNA polymerase II transcription subunit 19a (MED19A), found in Arabidopsis thaliana (Mouse-ear cress).